The following is a 116-amino-acid chain: Transmembrane protein 213 (116 aa).

Residues 1 to 35 form the signal peptide; it reads MAQSGVFLRNPGHLTSAPQAALLFSLVLTSFHLSC. Residues 36-79 lie on the Extracellular side of the membrane; it reads GTETSSSNSTLSAHHPDPGTLEQCANVDFCPLASLCCRASVDEY. The helical transmembrane segment at 80 to 100 threads the bilayer; that stretch reads GWIAAAVGWSFWFLTLILLCV. Over 101-116 the chain is Cytoplasmic; that stretch reads DKLMKLTPEEPKDLAA.

The protein resides in the membrane. This Mus musculus (Mouse) protein is Transmembrane protein 213 (Tmem213).